Here is a 106-residue protein sequence, read N- to C-terminus: Toxin-like structure LSTX-D6 (106 aa).

The first 20 residues, 1–20, serve as a signal peptide directing secretion; that stretch reads MMKVLVVAALLVTLISYSSS. Residues 21–41 constitute a propeptide that is removed on maturation; it reads EGIDDLEADELLSLMANEQTR. Disulfide bonds link C45/C60, C52/C69, C59/C85, and C71/C83.

The protein belongs to the neurotoxin 19 (CSTX) family. 02 (D7) subfamily. Expressed by the venom gland.

The protein localises to the secreted. This Lycosa singoriensis (Wolf spider) protein is Toxin-like structure LSTX-D6.